The sequence spans 152 residues: MMKKIDVKILDPRVGQQFPLPTYATSGSAGLDLRACLDDAVELAPGATTLVPTGLAIHIADPSLAAVMLPRSGLGHKHGIVLGNLVGLIDSDYQGQLMVSIWNRGQDSFTIEPGERIAQMVFVPVVQAEFNLVEAFDATERGEGGFGHSGRK.

Residues 71–73 (RSG), asparagine 84, 88–90 (LID), and methionine 98 contribute to the substrate site.

It belongs to the dUTPase family. Mg(2+) is required as a cofactor.

The enzyme catalyses dUTP + H2O = dUMP + diphosphate + H(+). Its pathway is pyrimidine metabolism; dUMP biosynthesis; dUMP from dCTP (dUTP route): step 2/2. This enzyme is involved in nucleotide metabolism: it produces dUMP, the immediate precursor of thymidine nucleotides and it decreases the intracellular concentration of dUTP so that uracil cannot be incorporated into DNA. This Salmonella agona (strain SL483) protein is Deoxyuridine 5'-triphosphate nucleotidohydrolase.